Reading from the N-terminus, the 71-residue chain is uncharacterized protein (71 aa).

Residues 5-22 form a helical membrane-spanning segment; that stretch reads VVMCSGLFCSVFAGAFML.

It is found in the membrane. This is an uncharacterized protein from Bacillus subtilis (strain 168).